Consider the following 326-residue polypeptide: DNA polymerase III subunit delta' (326 aa).

In terms of assembly, DNA polymerase III contains a core (composed of alpha, epsilon and theta chains) that associates with a tau subunit. This core dimerizes to form the POLIII' complex. PolIII' associates with the gamma complex (composed of gamma, delta, delta', psi and chi chains) and with the beta chain to form the complete DNA polymerase III complex.

The enzyme catalyses DNA(n) + a 2'-deoxyribonucleoside 5'-triphosphate = DNA(n+1) + diphosphate. Its function is as follows. DNA polymerase III is a complex, multichain enzyme responsible for most of the replicative synthesis in bacteria. This DNA polymerase also exhibits 3' to 5' exonuclease activity. The protein is DNA polymerase III subunit delta' (holB) of Buchnera aphidicola subsp. Acyrthosiphon pisum (strain APS) (Acyrthosiphon pisum symbiotic bacterium).